The sequence spans 602 residues: Leucine-rich repeat-containing protein 40 (602 aa).

Residues 1-26 (MSRHMRAPRFDPRAGFHAEGKDRGPS) form a disordered region. Basic and acidic residues predominate over residues 8–24 (PRFDPRAGFHAEGKDRG). The stretch at 35 to 58 (ARSSGQLNLAGRNLGEVPQCVWRI) is one LRR 1 repeat. At S71 the chain carries Phosphoserine. LRR repeat units follow at residues 81–103 (QTDL…DLRL), 104–126 (LPAL…AIRE), 127–149 (LDNL…EITS), 150–172 (LKNL…GFEH), 174–195 (SCLE…DFAL), 196–219 (LSSL…ISRM), 221–241 (RLKH…DVGS), 242–266 (MESL…SCRQ), 268–287 (KELH…HLQH), 288–310 (LQAI…EMAL), 311–334 (LQSL…LGNL), 336–356 (LKFL…IIAK), 398–421 (IATL…LFDA), 424–447 (TTLI…IVEL), 449–470 (EMVL…ELCL), 471–494 (LQKL…MSSL), 496–517 (KLQT…LYRI), 519–540 (TLEA…KMKL), 541–564 (MENL…LGNC), and 566–587 (QLRT…ILMK).

The polypeptide is Leucine-rich repeat-containing protein 40 (Lrrc40) (Mus musculus (Mouse)).